The primary structure comprises 340 residues: Methionine import ATP-binding protein MetN 2 (340 aa).

An ABC transporter domain is found at 2–241; it reads ITLQNVVKEY…PQEKVTQRFV (240 aa). 38–45 contacts ATP; it reads GYSGAGKS.

It belongs to the ABC transporter superfamily. Methionine importer (TC 3.A.1.24) family. The complex is composed of two ATP-binding proteins (MetN), two transmembrane proteins (MetI) and a solute-binding protein (MetQ).

It is found in the cell membrane. The enzyme catalyses L-methionine(out) + ATP + H2O = L-methionine(in) + ADP + phosphate + H(+). It carries out the reaction D-methionine(out) + ATP + H2O = D-methionine(in) + ADP + phosphate + H(+). Its function is as follows. Part of the ABC transporter complex MetNIQ involved in methionine import. Responsible for energy coupling to the transport system. This is Methionine import ATP-binding protein MetN 2 from Listeria monocytogenes serotype 4b (strain F2365).